We begin with the raw amino-acid sequence, 454 residues long: Bifunctional protein GlmU (454 aa).

Residues 1 to 226 are pyrophosphorylase; that stretch reads MTTTVIILAA…AFEVEGVNDR (226 aa). Residues 8 to 11, K22, Q73, 78 to 79, 100 to 102, G137, E151, N166, and N224 contribute to the UDP-N-acetyl-alpha-D-glucosamine site; these read LAAG, GT, and YGD. Position 102 (D102) interacts with Mg(2+). Residue N224 coordinates Mg(2+). Residues 227–247 are linker; the sequence is LQLAALEREFQLQQAKSLMQQ. An N-acetyltransferase region spans residues 248–454; sequence GVTLTDPSRF…NYQRPQKLKK (207 aa). The UDP-N-acetyl-alpha-D-glucosamine site is built by R330 and K348. The active-site Proton acceptor is the H360. UDP-N-acetyl-alpha-D-glucosamine is bound by residues Y363 and N374. Residues A377, 383–384, S402, A420, and R437 contribute to the acetyl-CoA site; that span reads NY.

This sequence in the N-terminal section; belongs to the N-acetylglucosamine-1-phosphate uridyltransferase family. The protein in the C-terminal section; belongs to the transferase hexapeptide repeat family. In terms of assembly, homotrimer. Requires Mg(2+) as cofactor.

The protein localises to the cytoplasm. The enzyme catalyses alpha-D-glucosamine 1-phosphate + acetyl-CoA = N-acetyl-alpha-D-glucosamine 1-phosphate + CoA + H(+). It carries out the reaction N-acetyl-alpha-D-glucosamine 1-phosphate + UTP + H(+) = UDP-N-acetyl-alpha-D-glucosamine + diphosphate. Its pathway is nucleotide-sugar biosynthesis; UDP-N-acetyl-alpha-D-glucosamine biosynthesis; N-acetyl-alpha-D-glucosamine 1-phosphate from alpha-D-glucosamine 6-phosphate (route II): step 2/2. The protein operates within nucleotide-sugar biosynthesis; UDP-N-acetyl-alpha-D-glucosamine biosynthesis; UDP-N-acetyl-alpha-D-glucosamine from N-acetyl-alpha-D-glucosamine 1-phosphate: step 1/1. It functions in the pathway bacterial outer membrane biogenesis; LPS lipid A biosynthesis. Its function is as follows. Catalyzes the last two sequential reactions in the de novo biosynthetic pathway for UDP-N-acetylglucosamine (UDP-GlcNAc). The C-terminal domain catalyzes the transfer of acetyl group from acetyl coenzyme A to glucosamine-1-phosphate (GlcN-1-P) to produce N-acetylglucosamine-1-phosphate (GlcNAc-1-P), which is converted into UDP-GlcNAc by the transfer of uridine 5-monophosphate (from uridine 5-triphosphate), a reaction catalyzed by the N-terminal domain. This is Bifunctional protein GlmU from Acinetobacter baylyi (strain ATCC 33305 / BD413 / ADP1).